The chain runs to 233 residues: Purine nucleoside phosphorylase DeoD-type (233 aa).

Histidine 4 lines the a purine D-ribonucleoside pocket. Phosphate-binding positions include glycine 20, arginine 24, arginine 43, and 87-90 (RVGT). A purine D-ribonucleoside-binding positions include 178 to 180 (EME) and 202 to 203 (SD). Catalysis depends on aspartate 203, which acts as the Proton donor.

The protein belongs to the PNP/UDP phosphorylase family. Homohexamer; trimer of homodimers.

The catalysed reaction is a purine D-ribonucleoside + phosphate = a purine nucleobase + alpha-D-ribose 1-phosphate. It carries out the reaction a purine 2'-deoxy-D-ribonucleoside + phosphate = a purine nucleobase + 2-deoxy-alpha-D-ribose 1-phosphate. Catalyzes the reversible phosphorolytic breakdown of the N-glycosidic bond in the beta-(deoxy)ribonucleoside molecules, with the formation of the corresponding free purine bases and pentose-1-phosphate. This is Purine nucleoside phosphorylase DeoD-type from Listeria monocytogenes serotype 4b (strain CLIP80459).